A 300-amino-acid chain; its full sequence is Urease accessory protein UreD (300 aa).

Belongs to the UreD family. UreD, UreF and UreG form a complex that acts as a GTP-hydrolysis-dependent molecular chaperone, activating the urease apoprotein by helping to assemble the nickel containing metallocenter of UreC. The UreE protein probably delivers the nickel.

It localises to the cytoplasm. Required for maturation of urease via the functional incorporation of the urease nickel metallocenter. The chain is Urease accessory protein UreD from Prochlorococcus marinus (strain AS9601).